The primary structure comprises 357 residues: MSTRRELLESPYLAAVSGRKPCRVPVWFMRQAGRSLPEYRALRERYSMLAACFEPEVACEITLQPLRRYDVDAAILFSDIVVPLCAAGIDLDIVPDVGPVIGDPVRTATDIHAMKPLEPQAIQPIFQAISLLVAALGDVPLIGFAGAPFTLASYLVEGGPSRNHPRTKAMMLAEPASWHTLMDKLTDLTLGFLLGQIDAGVDAIQVFDSWAGTLSLSDYRQYVLPHSARIFATVAEHGVPMTHFGVGTADLLGAMSAAVRSGEKPGHQAVVGVDWRTSLTDAAARVEPCTALQGNLDPVVLLAGWPAVERVARTVVDDGRRAVVAGAAGHVFNLGHGVLPETDPGVLSELVSFIHSL.

Substrate-binding positions include 30 to 34 (RQAGR), Asp79, Tyr154, Ser209, and His336.

It belongs to the uroporphyrinogen decarboxylase family. In terms of assembly, homodimer.

Its subcellular location is the cytoplasm. It carries out the reaction uroporphyrinogen III + 4 H(+) = coproporphyrinogen III + 4 CO2. The protein operates within porphyrin-containing compound metabolism; protoporphyrin-IX biosynthesis; coproporphyrinogen-III from 5-aminolevulinate: step 4/4. In terms of biological role, catalyzes the decarboxylation of four acetate groups of uroporphyrinogen-III to yield coproporphyrinogen-III. The chain is Uroporphyrinogen decarboxylase from Mycobacterium leprae (strain Br4923).